The primary structure comprises 201 residues: Ribosome maturation factor RimP (201 aa).

It belongs to the RimP family.

The protein localises to the cytoplasm. Its function is as follows. Required for maturation of 30S ribosomal subunits. This chain is Ribosome maturation factor RimP, found in Rhizobium leguminosarum bv. trifolii (strain WSM2304).